The primary structure comprises 196 residues: Cilia- and flagella-associated protein 107 (196 aa).

Mn stretches follow at residues Thr46–His61 and Ile96–Tyr108. The segment at Tyr168–Phe196 is disordered. The span at Pro184 to Phe196 shows a compositional bias: pro residues.

Microtubule inner protein component of sperm flagellar doublet microtubules. As to expression, expressed in trachea multiciliated cells.

It localises to the cytoplasm. The protein resides in the cytoskeleton. Its subcellular location is the cilium axoneme. It is found in the flagellum axoneme. Microtubule inner protein (MIP) part of the dynein-decorated doublet microtubules (DMTs) in cilia axoneme, which is required for motile cilia beating. The sequence is that of Cilia- and flagella-associated protein 107 from Bos taurus (Bovine).